A 597-amino-acid chain; its full sequence is Probable translation initiation factor IF-2 (597 aa).

The tr-type G domain occupies 8-225 (LRQPIVVVLG…LLAGLTQQYL (218 aa)). The interval 17–24 (GHVDHGKT) is G1. 17 to 24 (GHVDHGKT) contributes to the GTP binding site. A G2 region spans residues 42-46 (EMTQE). Residues 81 to 84 (DTPG) form a G3 region. GTP is bound by residues 81 to 85 (DTPGH) and 135 to 138 (NKID). The segment at 135 to 138 (NKID) is G4. The tract at residues 203–205 (SGK) is G5.

This sequence belongs to the TRAFAC class translation factor GTPase superfamily. Classic translation factor GTPase family. IF-2 subfamily.

Functionally, function in general translation initiation by promoting the binding of the formylmethionine-tRNA to ribosomes. Seems to function along with eIF-2. The sequence is that of Probable translation initiation factor IF-2 from Metallosphaera sedula (strain ATCC 51363 / DSM 5348 / JCM 9185 / NBRC 15509 / TH2).